The primary structure comprises 417 residues: RH-like protein IIF (417 aa).

The next 11 helical transmembrane spans lie at Cys12–Thr32, Leu44–Phe64, Val77–Phe97, Ile125–Val145, Phe172–Pro192, Thr203–Phe223, Val238–Leu258, Ile265–Cys285, Leu287–Gly307, Asn331–Thr351, and Met358–Leu378.

It belongs to the ammonium transporter (TC 2.A.49) family. Rh subfamily.

Its subcellular location is the membrane. Functionally, may be part of an oligomeric complex which is likely to have a transport or channel function in the erythrocyte membrane. The polypeptide is RH-like protein IIF (Pan troglodytes (Chimpanzee)).